The primary structure comprises 374 residues: Chaperone protein DnaJ (374 aa).

The 66-residue stretch at 5–70 (DYYEVLGVNL…RKRASYDQFG (66 aa)) folds into the J domain. The CR-type zinc-finger motif lies at 133–210 (GLSRTIKVPT…CHGQGRQQQT (78 aa)). Positions 146, 149, 162, 165, 184, 187, 198, and 201 each coordinate Zn(2+). CXXCXGXG motif repeat units follow at residues 146–153 (CKTCNGSG), 162–169 (CPRCNGSG), 184–191 (CSVCRGRG), and 198–205 (CTDCHGQG).

Belongs to the DnaJ family. Homodimer. Zn(2+) serves as cofactor.

Its subcellular location is the cytoplasm. Its function is as follows. Participates actively in the response to hyperosmotic and heat shock by preventing the aggregation of stress-denatured proteins and by disaggregating proteins, also in an autonomous, DnaK-independent fashion. Unfolded proteins bind initially to DnaJ; upon interaction with the DnaJ-bound protein, DnaK hydrolyzes its bound ATP, resulting in the formation of a stable complex. GrpE releases ADP from DnaK; ATP binding to DnaK triggers the release of the substrate protein, thus completing the reaction cycle. Several rounds of ATP-dependent interactions between DnaJ, DnaK and GrpE are required for fully efficient folding. Also involved, together with DnaK and GrpE, in the DNA replication of plasmids through activation of initiation proteins. The sequence is that of Chaperone protein DnaJ from Coxiella burnetii (strain RSA 493 / Nine Mile phase I).